Reading from the N-terminus, the 208-residue chain is Uracil phosphoribosyltransferase (208 aa).

5-phospho-alpha-D-ribose 1-diphosphate is bound by residues R78, R103, and 130–138 (DPMFATGGT). Uracil-binding positions include I193 and 198 to 200 (GDA). D199 serves as a coordination point for 5-phospho-alpha-D-ribose 1-diphosphate.

This sequence belongs to the UPRTase family. It depends on Mg(2+) as a cofactor.

The catalysed reaction is UMP + diphosphate = 5-phospho-alpha-D-ribose 1-diphosphate + uracil. It functions in the pathway pyrimidine metabolism; UMP biosynthesis via salvage pathway; UMP from uracil: step 1/1. With respect to regulation, allosterically activated by GTP. Functionally, catalyzes the conversion of uracil and 5-phospho-alpha-D-ribose 1-diphosphate (PRPP) to UMP and diphosphate. The polypeptide is Uracil phosphoribosyltransferase (Campylobacter jejuni subsp. jejuni serotype O:2 (strain ATCC 700819 / NCTC 11168)).